Here is a 275-residue protein sequence, read N- to C-terminus: Glucan endo-1,3-beta-glucosidase, acidic isoform PR-N (275 aa).

Glu-196 serves as the catalytic Nucleophile.

Belongs to the glycosyl hydrolase 17 family. In terms of processing, the N-terminus is blocked.

The protein resides in the secreted. Its subcellular location is the extracellular space. The catalysed reaction is Hydrolysis of (1-&gt;3)-beta-D-glucosidic linkages in (1-&gt;3)-beta-D-glucans.. Implicated in the defense of plants against pathogens. This chain is Glucan endo-1,3-beta-glucosidase, acidic isoform PR-N (PRN), found in Nicotiana tabacum (Common tobacco).